A 56-amino-acid polypeptide reads, in one-letter code: Large ribosomal subunit protein eL37 (56 aa).

Positions 19, 22, 34, and 37 each coordinate Zn(2+). A C4-type zinc finger spans residues 19 to 37; it reads CRRCGSVSLNIHTKQCTSC.

Belongs to the eukaryotic ribosomal protein eL37 family. The cofactor is Zn(2+).

In terms of biological role, binds to the 23S rRNA. The sequence is that of Large ribosomal subunit protein eL37 from Methanococcoides burtonii (strain DSM 6242 / NBRC 107633 / OCM 468 / ACE-M).